A 428-amino-acid polypeptide reads, in one-letter code: Hercynine oxygenase (428 aa).

Residue histidine 46 participates in Fe cation binding. 82 to 85 provides a ligand contact to gamma-L-glutamyl-L-cysteine; sequence RASR. Positions 129 and 133 each coordinate Fe cation. The gamma-L-glutamyl-L-cysteine site is built by aspartate 411 and arginine 415.

It belongs to the EgtB family. As to quaternary structure, monomer. The cofactor is Fe(2+).

It carries out the reaction gamma-L-glutamyl-L-cysteine + hercynine + O2 = gamma-L-glutamyl-hercynylcysteine S-oxide + H2O. It participates in amino-acid biosynthesis; ergothioneine biosynthesis. In terms of biological role, catalyzes the oxidative sulfurization of hercynine (N-alpha,N-alpha,N-alpha-trimethyl-L-histidine) into hercynyl-gamma-L-glutamyl-L-cysteine sulfoxide, a step in the biosynthesis pathway of ergothioneine. Cannot use the alternative thiols cysteine, N-acetylcysteine, or glutathione instead of gamma-glutamylcysteine as substrates, and histidine is a poor sulfur acceptor substrate compared to hercynine. The polypeptide is Hercynine oxygenase (Mycolicibacterium smegmatis (strain ATCC 700084 / mc(2)155) (Mycobacterium smegmatis)).